The primary structure comprises 248 residues: Oligo(A)/oligo(T)-binding protein (248 aa).

Residues 1–36 (MAKTLAQGRKPGSGRKPGKGKTLREGRKPGSGRRRR) mediate DNA binding. Disordered stretches follow at residues 1 to 127 (MAKT…LQQQ) and 219 to 248 (TAAS…NATI). 3 tandem repeats follow at residues 8 to 12 (GRKPG), 14 to 18 (GRKPG), and 26 to 30 (GRKPG). A 3 X 5 AA repeats of G-R-K-P-G region spans residues 8–30 (GRKPGSGRKPGKGKTLREGRKPG). The segment covering 12-21 (GSGRKPGKGK) has biased composition (basic residues). Positions 37–71 (QDTGGKETDGSQQDQESRLISSRDMEAVDALRELT) are enriched in basic and acidic residues. Low complexity-rich tracts occupy residues 72–100 (HSPS…LPPS) and 111–127 (QQQQ…LQQQ).

As to quaternary structure, binds as a dimer or higher oligomer.

Functionally, DNA-binding protein that recognizes oligo(A).oligo(T) tracts (A.T DNA). Can bind to any 11 bp sequence in which 10 bases conform to an uninterrupted oligo(A).oligo(T) tract. The protein is Oligo(A)/oligo(T)-binding protein (DAT1) of Saccharomyces cerevisiae (strain ATCC 204508 / S288c) (Baker's yeast).